The sequence spans 614 residues: Glutamine--fructose-6-phosphate aminotransferase [isomerizing] (614 aa).

Cys2 serves as the catalytic Nucleophile; for GATase activity. In terms of domain architecture, Glutamine amidotransferase type-2 spans 2–221 (CGIVGYIGKR…DGEIAVINRG (220 aa)). SIS domains follow at residues 291 to 430 (YKEK…EKGT) and 463 to 604 (LSKT…VDQP). The active-site For Fru-6P isomerization activity is the Lys609.

Homodimer.

It is found in the cytoplasm. It catalyses the reaction D-fructose 6-phosphate + L-glutamine = D-glucosamine 6-phosphate + L-glutamate. Its function is as follows. Catalyzes the first step in hexosamine metabolism, converting fructose-6P into glucosamine-6P using glutamine as a nitrogen source. The chain is Glutamine--fructose-6-phosphate aminotransferase [isomerizing] from Bacteroides thetaiotaomicron (strain ATCC 29148 / DSM 2079 / JCM 5827 / CCUG 10774 / NCTC 10582 / VPI-5482 / E50).